We begin with the raw amino-acid sequence, 417 residues long: Serine--tRNA ligase (417 aa).

226 to 228 (TSE) is an L-serine binding site. Residues 257–259 (RRE) and V273 contribute to the ATP site. E280 provides a ligand contact to L-serine. Residue 344–347 (ELTS) coordinates ATP. T379 contacts L-serine.

The protein belongs to the class-II aminoacyl-tRNA synthetase family. Type-1 seryl-tRNA synthetase subfamily. As to quaternary structure, homodimer. The tRNA molecule binds across the dimer.

The protein resides in the cytoplasm. The enzyme catalyses tRNA(Ser) + L-serine + ATP = L-seryl-tRNA(Ser) + AMP + diphosphate + H(+). It catalyses the reaction tRNA(Sec) + L-serine + ATP = L-seryl-tRNA(Sec) + AMP + diphosphate + H(+). The protein operates within aminoacyl-tRNA biosynthesis; selenocysteinyl-tRNA(Sec) biosynthesis; L-seryl-tRNA(Sec) from L-serine and tRNA(Sec): step 1/1. In terms of biological role, catalyzes the attachment of serine to tRNA(Ser). Is also able to aminoacylate tRNA(Sec) with serine, to form the misacylated tRNA L-seryl-tRNA(Sec), which will be further converted into selenocysteinyl-tRNA(Sec). This Mycobacterium sp. (strain JLS) protein is Serine--tRNA ligase.